Here is a 552-residue protein sequence, read N- to C-terminus: Serine/threonine-protein kinase RIO2 (552 aa).

The region spanning 97–272 is the Protein kinase domain; it reads VGNQMGVGKE…DRDVKCIKDF (176 aa). Residue lysine 123 participates in ATP binding. Aspartate 228 functions as the Proton acceptor in the catalytic mechanism. 9 positions are modified to phosphoserine: serine 332, serine 335, serine 337, serine 350, serine 362, serine 380, serine 382, serine 385, and serine 390. Residues 399 to 408 carry the Nuclear export signal motif; that stretch reads ALEEIKGQVV. Phosphoserine occurs at positions 412, 417, and 442. At tyrosine 445 the chain carries Phosphotyrosine. Serine 548 carries the post-translational modification Phosphoserine.

The protein belongs to the protein kinase superfamily. RIO-type Ser/Thr kinase family. In terms of assembly, associated with late 40S pre-ribosomal particles. Interacts with PLK1 (via its N-terminus). Mg(2+) serves as cofactor. In terms of processing, autophosphorylated (in vitro). Phosphorylation at Ser-335, Ser-380, Ser-548 by PLK1 affects the timing of the metaphase-anaphase transition.

The protein resides in the cytoplasm. The enzyme catalyses L-seryl-[protein] + ATP = O-phospho-L-seryl-[protein] + ADP + H(+). It catalyses the reaction L-threonyl-[protein] + ATP = O-phospho-L-threonyl-[protein] + ADP + H(+). Its function is as follows. Serine/threonine-protein kinase involved in the final steps of cytoplasmic maturation of the 40S ribosomal subunit. Involved in export of the 40S pre-ribosome particles (pre-40S) from the nucleus to the cytoplasm. Its kinase activity is required for the release of NOB1, PNO1 and LTV1 from the late pre-40S and the processing of 18S-E pre-rRNA to the mature 18S rRNA. Regulates the timing of the metaphase-anaphase transition during mitotic progression, and its phosphorylation, most likely by PLK1, regulates this function. The protein is Serine/threonine-protein kinase RIO2 of Homo sapiens (Human).